The sequence spans 714 residues: Fatty acid oxidation complex subunit alpha (714 aa).

Residues 1-190 (MEMTSAFTLN…KLGLVDDVVP (190 aa)) are enoyl-CoA hydratase. Residues 306–714 (APLNSVGILG…FWKTTATDLQ (409 aa)) form a 3-hydroxyacyl-CoA dehydrogenase region.

It in the N-terminal section; belongs to the enoyl-CoA hydratase/isomerase family. In the central section; belongs to the 3-hydroxyacyl-CoA dehydrogenase family. Heterotetramer of two alpha chains (FadJ) and two beta chains (FadI).

It is found in the cytoplasm. It catalyses the reaction a (3S)-3-hydroxyacyl-CoA = a (2E)-enoyl-CoA + H2O. The enzyme catalyses a 4-saturated-(3S)-3-hydroxyacyl-CoA = a (3E)-enoyl-CoA + H2O. The catalysed reaction is a (3S)-3-hydroxyacyl-CoA + NAD(+) = a 3-oxoacyl-CoA + NADH + H(+). It carries out the reaction (3S)-3-hydroxybutanoyl-CoA = (3R)-3-hydroxybutanoyl-CoA. The protein operates within lipid metabolism; fatty acid beta-oxidation. Catalyzes the formation of a hydroxyacyl-CoA by addition of water on enoyl-CoA. Also exhibits 3-hydroxyacyl-CoA epimerase and 3-hydroxyacyl-CoA dehydrogenase activities. The polypeptide is Fatty acid oxidation complex subunit alpha (Escherichia coli O8 (strain IAI1)).